The primary structure comprises 545 residues: Chaperonin GroEL (545 aa).

ATP-binding positions include 31-34, 88-92, Gly415, 478-480, and Asp494; these read TLGP, DGTTT, and NAA.

It belongs to the chaperonin (HSP60) family. In terms of assembly, forms a cylinder of 14 subunits composed of two heptameric rings stacked back-to-back. Interacts with the co-chaperonin GroES.

It localises to the cytoplasm. The enzyme catalyses ATP + H2O + a folded polypeptide = ADP + phosphate + an unfolded polypeptide.. Together with its co-chaperonin GroES, plays an essential role in assisting protein folding. The GroEL-GroES system forms a nano-cage that allows encapsulation of the non-native substrate proteins and provides a physical environment optimized to promote and accelerate protein folding. This chain is Chaperonin GroEL, found in Streptococcus pyogenes serotype M4 (strain MGAS10750).